A 323-amino-acid chain; its full sequence is Formyl peptide receptor-related sequence 4 (323 aa).

Topologically, residues 1–29 (MEVNISMPLNGSEVVFYDSTTSRVLWILS) are extracellular. N-linked (GlcNAc...) asparagine glycans are attached at residues N4 and N10. A helical membrane pass occupies residues 30-50 (LVVLFITFVLGVLGNGLVIWV). The Cytoplasmic segment spans residues 51 to 66 (AGFQMAHTVTTVSYLN). The chain crosses the membrane as a helical span at residues 67–87 (LALSDLSFMATLPLHIISMVM). At 88–99 (RGKWLFGWFLCK) the chain is on the extracellular side. The cysteines at positions 98 and 176 are disulfide-linked. Residues 100–120 (LVHIIANINLFVSIFLITLIA) form a helical membrane-spanning segment. Residues 121-144 (MDRCICVLCPVWSQNHRTVSLARK) lie on the Cytoplasmic side of the membrane. The helical transmembrane segment at 145-165 (VVLGAWIFALLLTLPHFLFLT) threads the bilayer. The Extracellular segment spans residues 166–202 (TVRDARGDVYCISKFESWVATSEEQLKVSVIAATASG). Residues 203 to 223 (IINFIIGFSMPMSFIAICYGL) traverse the membrane as a helical segment. Topologically, residues 224 to 241 (MAAKICRRGFVNSSRPLR) are cytoplasmic. A helical transmembrane segment spans residues 242 to 262 (VLTAVAVSFFVCWFPFQLIML). The Extracellular segment spans residues 263–280 (LGNIFNNETLSIIHMLVN). N-linked (GlcNAc...) asparagine glycosylation is present at N269. Residues 281–301 (PANTLASFNSCLNPILYVFLG) traverse the membrane as a helical segment. Over 302–323 (QEFRDRLIYSLYASLERALRED) the chain is Cytoplasmic.

The protein belongs to the G-protein coupled receptor 1 family. Expressed in 0.6 % of a subset of sensory neurons located in the apical layer of the vomeronasal organ. Each neuron appears to express only one receptor gene.

The protein resides in the cell membrane. Its function is as follows. May have an olfactory function associated with the identification of pathogens or of pathogenic states. The polypeptide is Formyl peptide receptor-related sequence 4 (Fpr-rs4) (Mus musculus (Mouse)).